The following is a 324-amino-acid chain: Elongation factor P--(R)-beta-lysine ligase (324 aa).

75–77 (SPE) contacts substrate. Residues 99–101 (RNE) and N108 each bind ATP. Y117 serves as a coordination point for substrate. 243 to 244 (EL) contacts ATP. A substrate-binding site is contributed by E250. G299 is a binding site for ATP.

This sequence belongs to the class-II aminoacyl-tRNA synthetase family. EpmA subfamily. Homodimer.

The catalysed reaction is D-beta-lysine + L-lysyl-[protein] + ATP = N(6)-((3R)-3,6-diaminohexanoyl)-L-lysyl-[protein] + AMP + diphosphate + H(+). Functionally, with EpmB is involved in the beta-lysylation step of the post-translational modification of translation elongation factor P (EF-P). Catalyzes the ATP-dependent activation of (R)-beta-lysine produced by EpmB, forming a lysyl-adenylate, from which the beta-lysyl moiety is then transferred to the epsilon-amino group of a conserved specific lysine residue in EF-P. In Pseudoalteromonas translucida (strain TAC 125), this protein is Elongation factor P--(R)-beta-lysine ligase.